The chain runs to 268 residues: Ribonuclease P protein subunit p30 (268 aa).

Ala2 carries the post-translational modification N-acetylalanine. At Ser251 the chain carries Phosphoserine.

This sequence belongs to the eukaryotic/archaeal RNase P protein component 3 family. In terms of assembly, component of nuclear RNase P and RNase MRP ribonucleoproteins. RNase P consists of a catalytic RNA moiety and about 10 protein subunits; POP1, POP4, POP5, POP7, RPP14, RPP21, RPP25, RPP30, RPP38 and RPP40. Within the RNase P complex, POP1, POP7 and RPP25 form the 'finger' subcomplex, POP5, RPP14, RPP40 and homodimeric RPP30 form the 'palm' subcomplex, and RPP21, POP4 and RPP38 form the 'wrist' subcomplex. All subunits of the RNase P complex interact with the catalytic RNA. Several subunits of RNase P are also part of the RNase MRP complex. RNase MRP consists of a catalytic RNA moiety and about 8 protein subunits; POP1, POP7, RPP25, RPP30, RPP38, RPP40 and possibly also POP4 and POP5.

Its subcellular location is the nucleus. The protein localises to the nucleolus. Component of ribonuclease P, a ribonucleoprotein complex that generates mature tRNA molecules by cleaving their 5'-ends. Also a component of the MRP ribonuclease complex, which cleaves pre-rRNA sequences. The protein is Ribonuclease P protein subunit p30 (Rpp30) of Mus musculus (Mouse).